The primary structure comprises 196 residues: Blue copper protein (196 aa).

A signal peptide spans 1–22 (MAGVFKTVTFLVLVFAAVVVFA). A Phytocyanin domain is found at 23-125 (EDYDVGDDTE…GQKLSITVVA (103 aa)). His66 contributes to the Cu cation binding site. A disulfide bridge links Cys79 with Cys113. Asn98 is a glycosylation site (N-linked (GlcNAc...) asparagine). The Cu cation site is built by Cys107, His112, and Gln117. The segment at 133–173 (TPGAGATPAPGSTPSTGGTTPPTAGGTTTPSGSSGTTTPAG) is disordered. The segment covering 135–173 (GAGATPAPGSTPSTGGTTPPTAGGTTTPSGSSGTTTPAG) has biased composition (low complexity). Residue Asn174 is the site of GPI-anchor amidated asparagine attachment. Residues 175–196 (AASSLGGATFLVAFVSAVVALF) constitute a propeptide, removed in mature form.

It localises to the cell membrane. Functionally, probably acts as an electron carrier. The polypeptide is Blue copper protein (BCB) (Arabidopsis thaliana (Mouse-ear cress)).